The primary structure comprises 828 residues: Beta-galactosidase (828 aa).

The signal sequence occupies residues 1-20 (MKMKQFNLLSLFLILITSFG). N-linked (GlcNAc...) asparagine glycans are attached at residues N23 and N153. Residue E183 is the Proton donor of the active site. The active-site Nucleophile is the E252. 7 N-linked (GlcNAc...) asparagine glycosylation sites follow: N253, N350, N379, N492, N667, N799, and N803. Residues 742-828 (AHEHNKVELS…PKRLFVEVEC (87 aa)) form the SUEL-type lectin domain.

It belongs to the glycosyl hydrolase 35 family.

The protein localises to the secreted. It localises to the extracellular space. It is found in the apoplast. It catalyses the reaction Hydrolysis of terminal non-reducing beta-D-galactose residues in beta-D-galactosides.. The sequence is that of Beta-galactosidase from Brassica oleracea (Wild cabbage).